The sequence spans 385 residues: Chaperone protein DnaJ (385 aa).

In terms of domain architecture, J spans 3-68 (DYYEILGVTR…QKRAAYDRFG (66 aa)). The segment at 135–213 (GAEVEITVPA…CHGHGQVRRE (79 aa)) adopts a CR-type zinc-finger fold. Residues C148, C151, C165, C168, C187, C190, C201, and C204 each contribute to the Zn(2+) site. 4 CXXCXGXG motif repeats span residues 148 to 155 (CEVCEGSG), 165 to 172 (CGTCGGAG), 187 to 194 (CPRCGGSG), and 201 to 208 (CSNCHGHG).

Belongs to the DnaJ family. Homodimer. It depends on Zn(2+) as a cofactor.

It localises to the cytoplasm. Functionally, participates actively in the response to hyperosmotic and heat shock by preventing the aggregation of stress-denatured proteins and by disaggregating proteins, also in an autonomous, DnaK-independent fashion. Unfolded proteins bind initially to DnaJ; upon interaction with the DnaJ-bound protein, DnaK hydrolyzes its bound ATP, resulting in the formation of a stable complex. GrpE releases ADP from DnaK; ATP binding to DnaK triggers the release of the substrate protein, thus completing the reaction cycle. Several rounds of ATP-dependent interactions between DnaJ, DnaK and GrpE are required for fully efficient folding. Also involved, together with DnaK and GrpE, in the DNA replication of plasmids through activation of initiation proteins. The protein is Chaperone protein DnaJ of Caulobacter vibrioides (strain ATCC 19089 / CIP 103742 / CB 15) (Caulobacter crescentus).